A 202-amino-acid chain; its full sequence is Na(+)-translocating NADH-quinone reductase subunit E (202 aa).

The next 6 helical transmembrane spans lie at 11–31 (SVFI…FIAI), 35–55 (VETA…TVPA), 81–101 (FLGF…LEML), 114–134 (GIYL…LFMV), 144–164 (VVYG…LAGI), and 180–200 (LGIA…FSGI).

The protein belongs to the NqrDE/RnfAE family. In terms of assembly, composed of six subunits; NqrA, NqrB, NqrC, NqrD, NqrE and NqrF.

It localises to the cell inner membrane. It catalyses the reaction a ubiquinone + n Na(+)(in) + NADH + H(+) = a ubiquinol + n Na(+)(out) + NAD(+). Its function is as follows. NQR complex catalyzes the reduction of ubiquinone-1 to ubiquinol by two successive reactions, coupled with the transport of Na(+) ions from the cytoplasm to the periplasm. NqrA to NqrE are probably involved in the second step, the conversion of ubisemiquinone to ubiquinol. This chain is Na(+)-translocating NADH-quinone reductase subunit E, found in Azotobacter vinelandii (strain DJ / ATCC BAA-1303).